A 305-amino-acid chain; its full sequence is Dihydroorotate dehydrogenase B (NAD(+)), catalytic subunit (305 aa).

FMN contacts are provided by residues serine 23 and 47–48; that span reads KG. Residues lysine 47 and 71-75 contribute to the substrate site; that span reads NAIGL. Residues asparagine 101 and asparagine 129 each contribute to the FMN site. Asparagine 129 contributes to the substrate binding site. Cysteine 132 serves as the catalytic Nucleophile. FMN-binding residues include lysine 167 and isoleucine 193. 194–195 serves as a coordination point for substrate; sequence NT. Residues glycine 219, 245–246, and 267–268 each bind FMN; these read GG and GT.

Belongs to the dihydroorotate dehydrogenase family. Type 1 subfamily. In terms of assembly, heterotetramer of 2 PyrK and 2 PyrD type B subunits. FMN is required as a cofactor.

It is found in the cytoplasm. The enzyme catalyses (S)-dihydroorotate + NAD(+) = orotate + NADH + H(+). It participates in pyrimidine metabolism; UMP biosynthesis via de novo pathway; orotate from (S)-dihydroorotate (NAD(+) route): step 1/1. In terms of biological role, catalyzes the conversion of dihydroorotate to orotate with NAD(+) as electron acceptor. The polypeptide is Dihydroorotate dehydrogenase B (NAD(+)), catalytic subunit (pyrD) (Geobacter sulfurreducens (strain ATCC 51573 / DSM 12127 / PCA)).